The chain runs to 284 residues: uncharacterized protein (284 aa).

Belongs to the methyltransferase superfamily.

It localises to the cytoplasm. Its subcellular location is the nucleus. Functionally, probable methyltransferase. This is an uncharacterized protein from Schizosaccharomyces pombe (strain 972 / ATCC 24843) (Fission yeast).